The following is a 93-amino-acid chain: Cobalt transport protein CbiN (93 aa).

The next 2 helical transmembrane spans lie at 5-25 (LMLLAMVVALVILPFFINHGG) and 63-83 (LLFTLQGSLGAAVIFYILGYC).

This sequence belongs to the CbiN family. In terms of assembly, forms an energy-coupling factor (ECF) transporter complex composed of an ATP-binding protein (A component, CbiO), a transmembrane protein (T component, CbiQ) and 2 possible substrate-capture proteins (S components, CbiM and CbiN) of unknown stoichimetry.

It is found in the cell inner membrane. It functions in the pathway cofactor biosynthesis; adenosylcobalamin biosynthesis. In terms of biological role, part of the energy-coupling factor (ECF) transporter complex CbiMNOQ involved in cobalt import. The chain is Cobalt transport protein CbiN from Salmonella choleraesuis (strain SC-B67).